Consider the following 431-residue polypeptide: MNTLDWTQLTADARTQALTRPVQTVATQTREAVATLIADVRARGDVALREITARFDGVTLDSFAVSEAEFAAADAAIAPELRQAMQDAVARIDTFHRAGMSEGYAVETAPGVVCEKIVRPIGRVGLYVPAGSAPLPSTALMLGVPARLAGCREVVLCTPPRKDGSVDPAVLVAAQLTGVRRVFKLGGAQAIAAMAYGTDSIPSCDKLFGPGNSFVTEAKQQVAQSGAAAIDMPAGPSEVLVIADAGAQPAFVAADLLSQAEHGPDSQVLLLSDSDALIAAVQEQLDLQLAQLSRADIARQALAQSRLIKVATLQEAFEISNRYAPEHLILALREPRAWLAQVEAAGSVFLGDYTPEALGDYCSGTNHVLPTSGAARAYSGVSVASFQNMVSVQAASKAGIDGIGACALILARAEGLDAHANAVALRMGVAA.

The NAD(+) site is built by Y127, Q189, and N212. Substrate-binding residues include S237, Q259, and H262. Q259 and H262 together coordinate Zn(2+). Active-site proton acceptor residues include E326 and H327. The substrate site is built by H327, D360, E414, and H419. Residue D360 participates in Zn(2+) binding. A Zn(2+)-binding site is contributed by H419.

Belongs to the histidinol dehydrogenase family. It depends on Zn(2+) as a cofactor.

The enzyme catalyses L-histidinol + 2 NAD(+) + H2O = L-histidine + 2 NADH + 3 H(+). It participates in amino-acid biosynthesis; L-histidine biosynthesis; L-histidine from 5-phospho-alpha-D-ribose 1-diphosphate: step 9/9. Its function is as follows. Catalyzes the sequential NAD-dependent oxidations of L-histidinol to L-histidinaldehyde and then to L-histidine. The protein is Histidinol dehydrogenase of Xanthomonas campestris pv. campestris (strain 8004).